Reading from the N-terminus, the 367-residue chain is Leucine-rich repeat-containing protein 28 (367 aa).

LRR repeat units follow at residues 16 to 36, 42 to 63, 66 to 87, 89 to 111, 112 to 133, 135 to 156, 158 to 180, 181 to 202, and 204 to 226; these read KHKNLFLNYRNLHHFPLELLK, HLERLYMKRNSLTTLPENLAQK, NLVELYLHSNNIVVVPEAIGSL, KLQCLDLSDNALEIVCPEIGGLR, ALRHLRLANNQLQFLPPEVGDL, ELQTLDISSNRLLALPERLHLC, SLQYLTVDRNRLCCVPRHLCQLP, SLNELSMAGNHLASLPIDLGRS, and ELQYVYVDNNIQLKGLPSYLYNK.

The chain is Leucine-rich repeat-containing protein 28 (Lrrc28) from Mus musculus (Mouse).